The following is a 471-amino-acid chain: Tryptophanase (471 aa).

Lys-270 bears the N6-(pyridoxal phosphate)lysine mark.

Belongs to the beta-eliminating lyase family. Homotetramer. Requires pyridoxal 5'-phosphate as cofactor.

The enzyme catalyses L-tryptophan + H2O = indole + pyruvate + NH4(+). It participates in amino-acid degradation; L-tryptophan degradation via pyruvate pathway; indole and pyruvate from L-tryptophan: step 1/1. In Histophilus somni (strain 2336) (Haemophilus somnus), this protein is Tryptophanase.